A 299-amino-acid polypeptide reads, in one-letter code: Ubiquinol-cytochrome c reductase complex assembly factor 1 (299 aa).

It belongs to the CBP3 family. Interacts with UQCC2. Interacts with UQCC3. Forms a complex, named COMB/coordinator of mitochondrial CYTB biogenesis, composed of UQCC1, UQCC2, UQCC4, UQCC5 and UQCC6; stabilizes nascent cytochrome b/MT-CYB and promotes its membrane insertion. Forms a complex, named COMB/coordinator of mitochondrial CYTB biogenesis, composed of UQCC1, UQCC2, UQCC4, UQCC5 and UQCC6; stabilizes nascent cytochrome b/MT-CYB and promotes its membrane insertion. Forms a complex, named COMA, composed of UQCC1, UQCC2 and UQCC4; activates MT-CYB translation. Forms a complex, named COMC, composed of UQCC1, UQCC2; UQCC3 and UQCC4; mediates MT-CYB hemylation and association with the first nuclear-encoded CIII subunit UQCRQ.

The protein localises to the mitochondrion inner membrane. The protein resides in the cytoplasmic vesicle. Functionally, required for the assembly of the ubiquinol-cytochrome c reductase complex (mitochondrial respiratory chain complex III or cytochrome b-c1 complex). Involved in cytochrome b translation and/or stability. The chain is Ubiquinol-cytochrome c reductase complex assembly factor 1 (UQCC1) from Homo sapiens (Human).